The primary structure comprises 663 residues: Forkhead protein sep1 (663 aa).

The fork-head DNA-binding region spans 128–222; it reads KPPYSYAMLI…LKLKLRKPGV (95 aa). Disordered stretches follow at residues 220–241 and 325–387; these read PGVN…KYGS and SPLQ…DVET. The span at 340-355 shows a compositional bias: low complexity; sequence SPASSASPSESLRNES. The residue at position 446 (Ser-446) is a Phosphoserine.

The protein localises to the nucleus. In terms of biological role, required for promoter sequence element PCB-driven, M-phase-specific transcription. Acts as a transcriptional activator with a role in the regulation of mitosis. Regulates septation and the periodic transcription of cdc15. The polypeptide is Forkhead protein sep1 (sep1) (Schizosaccharomyces pombe (strain 972 / ATCC 24843) (Fission yeast)).